We begin with the raw amino-acid sequence, 156 residues long: ATP synthase subunit b (156 aa).

The chain crosses the membrane as a helical span at residues 5 to 25 (LTLIVQMLVFAAFVLFTMKLV).

It belongs to the ATPase B chain family. As to quaternary structure, F-type ATPases have 2 components, F(1) - the catalytic core - and F(0) - the membrane proton channel. F(1) has five subunits: alpha(3), beta(3), gamma(1), delta(1), epsilon(1). F(0) has three main subunits: a(1), b(2) and c(10-14). The alpha and beta chains form an alternating ring which encloses part of the gamma chain. F(1) is attached to F(0) by a central stalk formed by the gamma and epsilon chains, while a peripheral stalk is formed by the delta and b chains.

Its subcellular location is the cell inner membrane. In terms of biological role, f(1)F(0) ATP synthase produces ATP from ADP in the presence of a proton or sodium gradient. F-type ATPases consist of two structural domains, F(1) containing the extramembraneous catalytic core and F(0) containing the membrane proton channel, linked together by a central stalk and a peripheral stalk. During catalysis, ATP synthesis in the catalytic domain of F(1) is coupled via a rotary mechanism of the central stalk subunits to proton translocation. Functionally, component of the F(0) channel, it forms part of the peripheral stalk, linking F(1) to F(0). This chain is ATP synthase subunit b, found in Legionella pneumophila (strain Paris).